The chain runs to 72 residues: Small proline-rich protein 2B (72 aa).

Positions 1–11 are enriched in low complexity; the sequence is MSYQQQQCKQP. Positions 1–20 are disordered; that stretch reads MSYQQQQCKQPCQPPPVCPT. 3 consecutive repeat copies span residues 21-29, 30-38, and 39-47. The interval 21-47 is 3 X 9 AA tandem repeats of P-K-C-P-[EQ]-P-C-P-P; that stretch reads PKCPEPCPPPKCPEPCPPPKCPQPCPP. Residues 42 to 72 form a disordered region; that stretch reads PQPCPPQQCQQKYPPVTPSPPCQPKYPPKSK. Residues 56–72 are compositionally biased toward pro residues; it reads PVTPSPPCQPKYPPKSK.

This sequence belongs to the cornifin (SPRR) family. In terms of tissue distribution, suprabasal layers of squamous-differentiated tissues such as epidermis, esophagus, tongue and trachea.

Its subcellular location is the cytoplasm. Its function is as follows. Cross-linked envelope protein of keratinocytes. It is a keratinocyte protein that first appears in the cell cytosol, but ultimately becomes cross-linked to membrane proteins by transglutaminase. All that results in the formation of an insoluble envelope beneath the plasma membrane. The chain is Small proline-rich protein 2B (SPRR2B) from Homo sapiens (Human).